Consider the following 554-residue polypeptide: Valerianol synthase TPS1E (554 aa).

Residues Asp-307 and Asp-311 each coordinate Mg(2+). Positions 326 to 330 match the DDXXD motif motif; sequence VQRWD. Mg(2+)-binding residues include Asp-452, Ser-456, and Glu-460.

Belongs to the terpene synthase family. The cofactor is Mg(2+).

It catalyses the reaction (2E,6E)-farnesyl diphosphate + H2O = valerianol + diphosphate. It functions in the pathway secondary metabolite biosynthesis; terpenoid biosynthesis. Functionally, terpene synthase that catalyzes the biosynthesis of the terpene valerianol, which is a volatile compound of floral scent. In Camellia hiemalis (Camellia), this protein is Valerianol synthase TPS1E.